The chain runs to 433 residues: ACT domain-containing protein ACR6 (433 aa).

4 ACT domains span residues Val30–Val110, Ser120–Asp207, Val250–Gly326, and Glu328–Lys402.

Functionally, may bind amino acids. This Arabidopsis thaliana (Mouse-ear cress) protein is ACT domain-containing protein ACR6.